Reading from the N-terminus, the 307-residue chain is Ornithine carbamoyltransferase (307 aa).

Carbamoyl phosphate contacts are provided by residues 54–57, glutamine 81, arginine 105, and 132–135; these read STRT and HPCQ. Residues asparagine 163, aspartate 221, and 225–226 contribute to the L-ornithine site; that span reads SM. Carbamoyl phosphate contacts are provided by residues 261 to 262 and arginine 289; that span reads CL.

This sequence belongs to the aspartate/ornithine carbamoyltransferase superfamily. OTCase family.

The protein localises to the cytoplasm. It carries out the reaction carbamoyl phosphate + L-ornithine = L-citrulline + phosphate + H(+). It participates in amino-acid biosynthesis; L-arginine biosynthesis; L-arginine from L-ornithine and carbamoyl phosphate: step 1/3. In terms of biological role, reversibly catalyzes the transfer of the carbamoyl group from carbamoyl phosphate (CP) to the N(epsilon) atom of ornithine (ORN) to produce L-citrulline. In Chromobacterium violaceum (strain ATCC 12472 / DSM 30191 / JCM 1249 / CCUG 213 / NBRC 12614 / NCIMB 9131 / NCTC 9757 / MK), this protein is Ornithine carbamoyltransferase.